A 207-amino-acid polypeptide reads, in one-letter code: Ribonuclease HII (207 aa).

The RNase H type-2 domain maps to 20–207 (QLFAGVDEVG…KPVKRVLGIE (188 aa)). The a divalent metal cation site is built by D26, E27, and D118.

It belongs to the RNase HII family. Mn(2+) is required as a cofactor. Mg(2+) serves as cofactor.

It is found in the cytoplasm. It catalyses the reaction Endonucleolytic cleavage to 5'-phosphomonoester.. Its function is as follows. Endonuclease that specifically degrades the RNA of RNA-DNA hybrids. The sequence is that of Ribonuclease HII from Aliivibrio salmonicida (strain LFI1238) (Vibrio salmonicida (strain LFI1238)).